The primary structure comprises 72 residues: Exodeoxyribonuclease 7 small subunit (72 aa).

The protein belongs to the XseB family. As to quaternary structure, heterooligomer composed of large and small subunits.

The protein localises to the cytoplasm. The catalysed reaction is Exonucleolytic cleavage in either 5'- to 3'- or 3'- to 5'-direction to yield nucleoside 5'-phosphates.. In terms of biological role, bidirectionally degrades single-stranded DNA into large acid-insoluble oligonucleotides, which are then degraded further into small acid-soluble oligonucleotides. This chain is Exodeoxyribonuclease 7 small subunit, found in Ruegeria pomeroyi (strain ATCC 700808 / DSM 15171 / DSS-3) (Silicibacter pomeroyi).